Here is a 242-residue protein sequence, read N- to C-terminus: MSETKITYDDFNPHAFETLDITDETKGAREVIRWAYDVYGDSIIYSCSFGAEGMILIDLISSVKKDAEIVFLDTNLHFQETYDLIDRVKARYPELNIKLKQPSLTLEEQADQVAPALWKQDPNQCCYIRKIKPLEEVLSGATAWVSGLRREQSPSRQATNFINKDERFKSVKVCPLIHWTWDDVWDYIKAHDLHYNELHDFNFPSIGCIPCTEAVSGNGDSRAGRWTNSTKTECGLHTTNKP.

The [4Fe-4S] cluster site is built by Cys-125, Cys-126, Cys-208, and Cys-211. Cys-234 functions as the Nucleophile; cysteine thiosulfonate intermediate in the catalytic mechanism.

The protein belongs to the PAPS reductase family. CysH subfamily. The cofactor is [4Fe-4S] cluster.

The protein localises to the cytoplasm. It catalyses the reaction [thioredoxin]-disulfide + sulfite + AMP + 2 H(+) = adenosine 5'-phosphosulfate + [thioredoxin]-dithiol. It functions in the pathway sulfur metabolism; hydrogen sulfide biosynthesis; sulfite from sulfate. Catalyzes the formation of sulfite from adenosine 5'-phosphosulfate (APS) using thioredoxin as an electron donor. This Staphylococcus saprophyticus subsp. saprophyticus (strain ATCC 15305 / DSM 20229 / NCIMB 8711 / NCTC 7292 / S-41) protein is Adenosine 5'-phosphosulfate reductase.